The chain runs to 283 residues: Small ribosomal subunit protein uS2 (283 aa).

The interval 229 to 283 (RSAGKSGEQPAEAEPMPDWERELLEGDGAKTEAKAEEPKAEAKKADEAPEAEKSN) is disordered. Positions 246–283 (DWERELLEGDGAKTEAKAEEPKAEAKKADEAPEAEKSN) are enriched in basic and acidic residues.

It belongs to the universal ribosomal protein uS2 family.

The polypeptide is Small ribosomal subunit protein uS2 (Cutibacterium acnes (strain DSM 16379 / KPA171202) (Propionibacterium acnes)).